Here is a 327-residue protein sequence, read N- to C-terminus: GTP 3',8-cyclase (327 aa).

Residues 4 to 226 form the Radical SAM core domain; the sequence is AFARDIHYLR…LRLGDHPGIR (223 aa). Residue Arg13 coordinates GTP. Cys20 and Cys24 together coordinate [4Fe-4S] cluster. S-adenosyl-L-methionine is bound at residue Tyr26. Position 27 (Cys27) interacts with [4Fe-4S] cluster. GTP is bound at residue Arg63. An S-adenosyl-L-methionine-binding site is contributed by Gly67. A GTP-binding site is contributed by Thr94. Residue Ser118 coordinates S-adenosyl-L-methionine. Residue Lys155 coordinates GTP. Met189 contacts S-adenosyl-L-methionine. Cys254 and Cys257 together coordinate [4Fe-4S] cluster. 259 to 261 is a binding site for GTP; it reads RLR. Cys271 lines the [4Fe-4S] cluster pocket.

This sequence belongs to the radical SAM superfamily. MoaA family. Monomer and homodimer. It depends on [4Fe-4S] cluster as a cofactor.

It carries out the reaction GTP + AH2 + S-adenosyl-L-methionine = (8S)-3',8-cyclo-7,8-dihydroguanosine 5'-triphosphate + 5'-deoxyadenosine + L-methionine + A + H(+). It participates in cofactor biosynthesis; molybdopterin biosynthesis. Its function is as follows. Catalyzes the cyclization of GTP to (8S)-3',8-cyclo-7,8-dihydroguanosine 5'-triphosphate. The polypeptide is GTP 3',8-cyclase (Heliobacterium modesticaldum (strain ATCC 51547 / Ice1)).